The primary structure comprises 1136 residues: DNA-directed RNA polymerase I subunit RPA2 (1136 aa).

The segment at 1 to 24 (MDPGSRWRNLPSGPSLKHLTDPSY) is disordered. Arg-180 serves as a coordination point for RNA. The segment at 194–208 (VRPKWKTRGPGYTHY) is loop B. Residues 236–247 (LNFIYRKELFFL) are loop A. Residue Asp-367 participates in RNA binding. Fork loop regions lie at residues 439-453 (LRSK…DSGL) and 474-489 (RGAD…VRRL). Lys-890 is a binding site for RNA. 2 residues coordinate DNA: Arg-1020 and Arg-1036. A Phosphoserine modification is found at Ser-1051. Cys-1071, Cys-1074, Cys-1099, and Cys-1102 together coordinate Zn(2+). The C4-type zinc-finger motif lies at 1071-1102 (CVKCGSLLSPLLEKPPPSWSAMRNRKYNCTLC).

This sequence belongs to the RNA polymerase beta chain family. In terms of assembly, component of the RNA polymerase I (Pol I) complex consisting of 13 subunits: a ten-subunit catalytic core composed of POLR1A/RPA1, POLR1B/RPA2, POLR1C/RPAC1, POLR1D/RPAC2, POLR1H/RPA12, POLR2E/RPABC1, POLR2F/RPABC2, POLR2H/RPABC3, POLR2K/RPABC4 and POLR2L/RPABC5; a mobile stalk subunit POLR1F/RPA43 protruding from the core and additional subunits homologous to general transcription factors POLR1E/RPA49 and POLR1G/RPA34. Part of Pol I pre-initiation complex (PIC), in which Pol I core assembles with RRN3 and promoter-bound UTBF and SL1/TIF-IB complex.

It localises to the nucleus. It is found in the nucleolus. The protein localises to the chromosome. It catalyses the reaction RNA(n) + a ribonucleoside 5'-triphosphate = RNA(n+1) + diphosphate. Its function is as follows. Catalytic core component of RNA polymerase I (Pol I), a DNA-dependent RNA polymerase which synthesizes ribosomal RNA precursors using the four ribonucleoside triphosphates as substrates. Transcribes 47S pre-rRNAs from multicopy rRNA gene clusters, giving rise to 5.8S, 18S and 28S ribosomal RNAs. Pol I-mediated transcription cycle proceeds through transcription initiation, transcription elongation and transcription termination stages. During transcription initiation, Pol I pre-initiation complex (PIC) is recruited by the selectivity factor 1 (SL1/TIF-IB) complex bound to the core promoter that precedes an rDNA repeat unit. The PIC assembly bends the promoter favoring the formation of the transcription bubble and promoter escape. Once the polymerase has escaped from the promoter it enters the elongation phase during which RNA is actively polymerized, based on complementarity with the template DNA strand. Highly processive, assembles in structures referred to as 'Miller trees' where many elongating Pol I complexes queue and transcribe the same rDNA coding regions. At terminator sequences downstream of the rDNA gene, PTRF interacts with Pol I and halts Pol I transcription leading to the release of the RNA transcript and polymerase from the DNA. Forms Pol I active center together with the largest subunit POLR1A/RPA1. Appends one nucleotide at a time to the 3' end of the nascent RNA, with POLR1A/RPA1 contributing a Mg(2+)-coordinating DxDGD motif, and POLR1B/RPA2 providing lysine residues believed to facilitate Watson-Crick base pairing between the incoming nucleotide and the template base. Typically, Mg(2+) ions direct a 5' nucleoside triphosphate to form a phosphodiester bond with the 3' hydroxyl of the preceding nucleotide of the nascent RNA, with the elimination of pyrophosphate. Has proofreading activity: Pauses and backtracks to allow the cleavage of a missincorporated nucleotide via POLR1H/RPA12. High Pol I processivity is associated with decreased transcription fidelity. The sequence is that of DNA-directed RNA polymerase I subunit RPA2 (POLR1B) from Pongo abelii (Sumatran orangutan).